The following is a 540-amino-acid chain: MGFFTSVLGIIGFVIGIPIGLILGFFVLIYSQPSHQEYPPARPLVETSISVLLDLLPDIPLWMKNPDYERVDWFNKFISYMWPYLDKAVCGIIRSSVQPLFADYIGTFCIESIEFENLSLGTLPPTVHGVKFYETNEKELLFEPSIKWAGNPNIVLVLKVLSLRIRVQLVDLQFFAIVRVALKPLLPTFPCFGMVVVSLMEKPHVDFGLKVLGGDLMSIPGLYRYVQETIKRQVSSMYHWPQVLEIPILDSSTASVKKPVGLLHVSILRARNLLKKDLLGTSDPYVKLSLTGEKLPAKKTTIKKRNLNPEWNEHFKLIVKDPNSQVLQLEVFDWDKVGGHDRLGMQMIPLQKINPGERKEFNLDLIKNSNVVMDSGDKKKRGRLEVDLRYVPFREESIKRRKESREEKSSEDDDFLSQAGLLSVAVQSAKDVEGKKKHSNPYAVVLFRGEKKKTKMLKKTRDPRWNEEFQFTLEEPPVKESIRVEVMSKGTGFHFRSKEELGHVDINLDDVVDNGRINQKYHLINSRNGIIHIEIRWTTS.

Residues 9–29 (GIIGFVIGIPIGLILGFFVLI) form a helical membrane-spanning segment. The SMP-LTD domain occupies 67–249 (DYERVDWFNK…WPQVLEIPIL (183 aa)). The segment at 227–509 (QETIKRQVSS…ELGHVDINLD (283 aa)) is phospholipid binding. C2 domains are found at residues 240–363 (WPQV…EFNL) and 401–521 (RKES…NQKY). Residues Asp-277, Asp-283, Asp-333, Asp-335, and Asp-341 each coordinate Ca(2+).

Belongs to the synaptotagmin family. Requires Ca(2+) as cofactor.

It is found in the membrane. In terms of biological role, may be involved in membrane trafficking. This is Synaptotagmin-3 (SYT3) from Arabidopsis thaliana (Mouse-ear cress).